The primary structure comprises 162 residues: 2-C-methyl-D-erythritol 2,4-cyclodiphosphate synthase (162 aa).

A divalent metal cation is bound by residues Asp9 and His11. Residues 9-11 (DVH) and 35-36 (HS) each bind 4-CDP-2-C-methyl-D-erythritol 2-phosphate. His43 contributes to the a divalent metal cation binding site. Residues 57–59 (DIG), 62–66 (FPDTD), 133–136 (TTTE), Phe140, and Arg143 contribute to the 4-CDP-2-C-methyl-D-erythritol 2-phosphate site.

Belongs to the IspF family. Homotrimer. A divalent metal cation is required as a cofactor.

It carries out the reaction 4-CDP-2-C-methyl-D-erythritol 2-phosphate = 2-C-methyl-D-erythritol 2,4-cyclic diphosphate + CMP. Its pathway is isoprenoid biosynthesis; isopentenyl diphosphate biosynthesis via DXP pathway; isopentenyl diphosphate from 1-deoxy-D-xylulose 5-phosphate: step 4/6. Its function is as follows. Involved in the biosynthesis of isopentenyl diphosphate (IPP) and dimethylallyl diphosphate (DMAPP), two major building blocks of isoprenoid compounds. Catalyzes the conversion of 4-diphosphocytidyl-2-C-methyl-D-erythritol 2-phosphate (CDP-ME2P) to 2-C-methyl-D-erythritol 2,4-cyclodiphosphate (ME-CPP) with a corresponding release of cytidine 5-monophosphate (CMP). The sequence is that of 2-C-methyl-D-erythritol 2,4-cyclodiphosphate synthase from Histophilus somni (strain 2336) (Haemophilus somnus).